The following is a 431-amino-acid chain: Adenylosuccinate synthetase (431 aa).

Residues 12 to 18 and 40 to 42 contribute to the GTP site; these read GDEGKGK and GHT. The active-site Proton acceptor is Asp-13. 2 residues coordinate Mg(2+): Asp-13 and Gly-40. Residues 13–16, 38–41, Thr-131, Arg-145, Gln-225, Thr-240, and Arg-304 contribute to the IMP site; these read DEGK and NAGH. The active-site Proton donor is His-41. 300 to 306 is a binding site for substrate; the sequence is VNTGRRR. Residues Arg-306, 332–334, and 414–416 each bind GTP; these read KLD and STS.

Belongs to the adenylosuccinate synthetase family. Homodimer. The cofactor is Mg(2+).

Its subcellular location is the cytoplasm. The enzyme catalyses IMP + L-aspartate + GTP = N(6)-(1,2-dicarboxyethyl)-AMP + GDP + phosphate + 2 H(+). Its pathway is purine metabolism; AMP biosynthesis via de novo pathway; AMP from IMP: step 1/2. In terms of biological role, plays an important role in the de novo pathway of purine nucleotide biosynthesis. Catalyzes the first committed step in the biosynthesis of AMP from IMP. The protein is Adenylosuccinate synthetase of Beijerinckia indica subsp. indica (strain ATCC 9039 / DSM 1715 / NCIMB 8712).